A 533-amino-acid chain; its full sequence is D-3-phosphoglycerate dehydrogenase (533 aa).

At Ala2 the chain carries N-acetylalanine. Ser14 is modified (phosphoserine). Lys21 bears the N6-acetyllysine; alternate mark. Lys21 participates in a covalent cross-link: Glycyl lysine isopeptide (Lys-Gly) (interchain with G-Cter in SUMO1); alternate. A Glycyl lysine isopeptide (Lys-Gly) (interchain with G-Cter in SUMO2); alternate cross-link involves residue Lys21. Position 58 is an N6-acetyllysine (Lys58). NAD(+)-binding positions include Thr78, Arg155–Ile156, Asp175, Thr207, Cys234–Arg236, and Asp260. Thr78 carries the phosphothreonine modification. Arg236 is an active-site residue. The active site involves Glu265. The active-site Proton donor is His283. His283–Ala286 serves as a coordination point for NAD(+).

This sequence belongs to the D-isomer specific 2-hydroxyacid dehydrogenase family. As to quaternary structure, homotetramer. Liver, kidney, brain, testis.

The catalysed reaction is (2R)-3-phosphoglycerate + NAD(+) = 3-phosphooxypyruvate + NADH + H(+). It functions in the pathway amino-acid biosynthesis; L-serine biosynthesis; L-serine from 3-phospho-D-glycerate: step 1/3. Catalyzes the reversible oxidation of 3-phospho-D-glycerate to 3-phosphonooxypyruvate, the first step of the phosphorylated L-serine biosynthesis pathway. Does not catalyze the reversible oxidation of 2-hydroxyglutarate to 2-oxoglutarate and the reversible oxidation of (S)-malate to oxaloacetate. This chain is D-3-phosphoglycerate dehydrogenase (Phgdh), found in Rattus norvegicus (Rat).